The chain runs to 203 residues: Monothiol glutaredoxin-7 (203 aa).

Positions 1–32 (MAIVINKRNVRVLVITNLLLIVVFFVLRNSNA) are cleaved as a signal peptide. In terms of domain architecture, Glutaredoxin spans 88–191 (AAEYNKIMEQ…DSFKKWSDGA (104 aa)). Cys108 contacts [2Fe-2S] cluster.

The protein belongs to the glutaredoxin family. Monothiol subfamily.

This Saccharomyces cerevisiae (strain ATCC 204508 / S288c) (Baker's yeast) protein is Monothiol glutaredoxin-7 (GRX7).